A 693-amino-acid polypeptide reads, in one-letter code: CREB-regulated transcription coactivator 2 (693 aa).

Positions 1–20 (MATSGANGPGSATASASNPR) are enriched in polar residues. Positions 1–30 (MATSGANGPGSATASASNPRKFSEKIALQK) are disordered. Alanine 2 is subject to N-acetylalanine. Arginine 51 is modified (asymmetric dimethylarginine; by PRMT6). Serine 70, serine 86, and serine 90 each carry phosphoserine. Arginine 99, arginine 120, and arginine 123 each carry asymmetric dimethylarginine; by PRMT6. The residue at position 136 (serine 136) is a Phosphoserine. Asymmetric dimethylarginine; by PRMT6 is present on residues arginine 161 and arginine 168. Threonine 169 carries the post-translational modification Phosphothreonine. Serine 171 carries the post-translational modification Phosphoserine. Positions 174 to 188 (ALHTSVMNPSPQDTY) are enriched in polar residues. The tract at residues 174-210 (ALHTSVMNPSPQDTYPSPAAPSVLPSRRGGCLDGETD) is disordered. The tract at residues 209–215 (TDSKVPA) is required for interaction with COP1. Lysine 234 participates in a covalent cross-link: Glycyl lysine isopeptide (Lys-Gly) (interchain with G-Cter in SUMO2). Residues 271–287 (TGGSLPDLTNLHFPPPL) carry the Nuclear export signal motif. 3 disordered regions span residues 271–307 (TGGS…GSST), 335–463 (HSPL…SPTL), and 476–548 (KLPT…QSYH). Residue serine 274 is modified to Phosphoserine; by MARK2. Position 306 is a phosphoserine (serine 306). Positions 339–351 (SHPSFQSSLSNPN) are enriched in polar residues. Low complexity-rich tracts occupy residues 352–378 (LQAS…SSLA) and 386–424 (SLGH…PGAS). Residues serine 368, serine 393, serine 433, and serine 456 each carry the phosphoserine modification. Residues 447-463 (SQQQLPKQFSPTMSPTL) show a composition bias toward polar residues. Tyrosine 488 bears the Phosphotyrosine mark. A phosphoserine mark is found at serine 489 and serine 492. Threonine 501 is modified (phosphothreonine). Phosphoserine occurs at positions 613 and 624.

Belongs to the TORC family. As to quaternary structure, binds, as a tetramer, through its N-terminal region, with the bZIP domain of CREB1. 'Arg-314' in the bZIP domain of CREB1 is essential for this interaction. Interaction, via its C-terminal, with TAF4, enhances recruitment of TAF4 to CREB1. Interacts with SIK2. Interacts with 14-3-3 proteins, YWHAB and YWHAG. Interacts (probably when phosphorylated at Ser-171) with YWHAE. Interacts with calmodulin-dependent catalytic subunit PPP3CA/calcineurin A. Interaction with COP1 mediates nuclear export and degradation of CRTC2. Post-translationally, phosphorylation/dephosphorylation states of Ser-171 are required for regulating transduction of CREB activity. CRTCs/TORCs are inactive when phosphorylated, and active when dephosphorylated at this site. This primary site of phosphorylation, is regulated by cAMP and calcium levels and is dependent on the phosphorylation of SIKs (SIK1 and SIK2) by LKB1. Following adenylyl cyclase activation, dephosphorylated at Ser-171 by PPP3CA/calcineurin A resulting in CRTC2 dissociation from 14-3-3 proteins and PPP3CA. Both insulin and AMPK increase this phosphorylation of CRTC2 while glucagon suppresses it. Phosphorylation at Ser-274 by MARK2 is induced under low glucose conditions and dephosphorylated in response to glucose influx. Phosphorylation at Ser-274 promotes interaction with 14-3-3 proteins and translocation to the cytoplasm. Asymmetric dimethylation of arginine resisues by PRMT6 enhances the association of CRTC2 with CREB on the promoters of gluconeogenic genes.

Its subcellular location is the cytoplasm. It is found in the nucleus. In terms of biological role, transcriptional coactivator for CREB1 which activates transcription through both consensus and variant cAMP response element (CRE) sites. Acts as a coactivator, in the SIK/TORC signaling pathway, being active when dephosphorylated and acts independently of CREB1 'Ser-133' phosphorylation. Enhances the interaction of CREB1 with TAF4. Regulates gluconeogenesis as a component of the LKB1/AMPK/TORC2 signaling pathway. Regulates the expression of specific genes such as the steroidogenic gene, StAR. Potent coactivator of PPARGC1A and inducer of mitochondrial biogenesis in muscle cells. The sequence is that of CREB-regulated transcription coactivator 2 (CRTC2) from Bos taurus (Bovine).